The following is a 507-amino-acid chain: Probable cyclic di-GMP phosphodiesterase PdeG (507 aa).

The next 2 helical transmembrane spans lie at 4 to 24 and 217 to 237; these read TLIPILVAICLFITGVAILNI and LIDKGFGILIFILLIACAAAF. The 255-residue stretch at 246–500 folds into the EAL domain; it reads SATPEEILRR…DLVKIILSKP (255 aa).

It localises to the cell membrane. It catalyses the reaction 3',3'-c-di-GMP + H2O = 5'-phosphoguanylyl(3'-&gt;5')guanosine + H(+). Functionally, phosphodiesterase (PDE) that catalyzes the hydrolysis of cyclic-di-GMP (c-di-GMP) to 5'-pGpG. The sequence is that of Probable cyclic di-GMP phosphodiesterase PdeG from Escherichia coli (strain K12).